We begin with the raw amino-acid sequence, 323 residues long: MAVSLPTKYPLRPITNIPKSHRPSLLRVRVTCSVTTTKPQPNREKLLVEQRTVNLPLSNDQSLQSTKPRPNREKLVVEQRLASPPLSNDPTLKSTWTHRLWVAAGCTTLFVSLAKSVIGGFDSHLCLEPALAGYAGYILADLGSGVYHWAIDNYGDESTPVVGTQIEAFQGHHKWPWTITRRQFANNLHALAQVITFTVLPLDLAFNDPVFHGFVCTFAFCILFSQQFHAWAHGTKSKLPPLVVALQDMGLLVSRRQHAEHHRAPYNNNYCIVSGAWNNVLDESKVFEALEMVFYFQLGVRPRSWSEPNSDWIEETEISNNQA.

A chloroplast-targeting transit peptide spans 1–77 (MAVSLPTKYP…PRPNREKLVV (77 aa)). Transmembrane regions (helical) follow at residues 101–121 (WVAA…IGGF) and 131–151 (LAGY…HWAI). The Histidine box-1 signature appears at 170–173 (QGHH). A helical membrane pass occupies residues 204–224 (LAFNDPVFHGFVCTFAFCILF). The short motif at 229-233 (HAWAH) is the Histidine box-2 element. Positions 258–262 (HAEHH) match the Histidine box-3 motif.

It belongs to the fatty acid desaturase CarF family. Fe(2+) serves as cofactor.

It localises to the plastid. The protein resides in the chloroplast membrane. The enzyme catalyses a 1-acyl-2-hexadecanoyl-glycerolipid + 2 reduced [2Fe-2S]-[ferredoxin] + O2 + 2 H(+) = a 1-acyl-2-[(3E)-hexadec-3-enoyl]-glycerolipid + 2 oxidized [2Fe-2S]-[ferredoxin] + 2 H2O. Its pathway is lipid metabolism; fatty acid metabolism. Functionally, fatty acid desaturase involved in the production of chloroplast-specific phosphatidylglycerol molecular species containing 16:1(3E). Catalyzes the formation of a trans double bond introduced close to the carboxyl group of palmitic acid, which is specifically esterified to the sn-2 glyceryl carbon of phosphatidylglycerol. This is Fatty acid desaturase 4, chloroplastic from Arabidopsis thaliana (Mouse-ear cress).